Reading from the N-terminus, the 581-residue chain is NADH-quinone oxidoreductase subunit C/D (581 aa).

An NADH dehydrogenase I subunit C region spans residues 1-172 (MSGTDLVSEL…PLFNMTAALF (172 aa)). Residues 196-581 (ELMILNYGPH…IDYVMSDVDR (386 aa)) are NADH dehydrogenase I subunit D.

In the N-terminal section; belongs to the complex I 30 kDa subunit family. This sequence in the C-terminal section; belongs to the complex I 49 kDa subunit family. In terms of assembly, NDH-1 is composed of 13 different subunits. Subunits NuoB, CD, E, F, and G constitute the peripheral sector of the complex.

It is found in the cell inner membrane. The catalysed reaction is a quinone + NADH + 5 H(+)(in) = a quinol + NAD(+) + 4 H(+)(out). Functionally, NDH-1 shuttles electrons from NADH, via FMN and iron-sulfur (Fe-S) centers, to quinones in the respiratory chain. The immediate electron acceptor for the enzyme in this species is believed to be ubiquinone. Couples the redox reaction to proton translocation (for every two electrons transferred, four hydrogen ions are translocated across the cytoplasmic membrane), and thus conserves the redox energy in a proton gradient. The polypeptide is NADH-quinone oxidoreductase subunit C/D (Rhodopseudomonas palustris (strain BisB5)).